We begin with the raw amino-acid sequence, 433 residues long: ATP-dependent protease ATPase subunit HslU (433 aa).

Residues I18, 60–65, D246, E311, and R383 contribute to the ATP site; that span reads GVGKTE.

This sequence belongs to the ClpX chaperone family. HslU subfamily. In terms of assembly, a double ring-shaped homohexamer of HslV is capped on each side by a ring-shaped HslU homohexamer. The assembly of the HslU/HslV complex is dependent on binding of ATP.

It localises to the cytoplasm. Functionally, ATPase subunit of a proteasome-like degradation complex; this subunit has chaperone activity. The binding of ATP and its subsequent hydrolysis by HslU are essential for unfolding of protein substrates subsequently hydrolyzed by HslV. HslU recognizes the N-terminal part of its protein substrates and unfolds these before they are guided to HslV for hydrolysis. The polypeptide is ATP-dependent protease ATPase subunit HslU (Cereibacter sphaeroides (strain ATCC 17029 / ATH 2.4.9) (Rhodobacter sphaeroides)).